We begin with the raw amino-acid sequence, 664 residues long: UvrABC system protein B (664 aa).

A Helicase ATP-binding domain is found at 25–170 (NSILLGNKYQ…FVGQRISIKE (146 aa)). Residue 38 to 45 (GVTGSGKT) coordinates ATP. The Beta-hairpin signature appears at 91–114 (YYDYYQPESYVPSKDLFIEKEATI). One can recognise a Helicase C-terminal domain in the interval 429–595 (QMEDLYIEIQ…TIVKKIQNIL (167 aa)). The UVR domain maps to 622–657 (KKLIDKLKFELEEAVNDERFEDAIVLRDKIKELGSK).

The protein belongs to the UvrB family. As to quaternary structure, forms a heterotetramer with UvrA during the search for lesions. Interacts with UvrC in an incision complex.

Its subcellular location is the cytoplasm. The UvrABC repair system catalyzes the recognition and processing of DNA lesions. A damage recognition complex composed of 2 UvrA and 2 UvrB subunits scans DNA for abnormalities. Upon binding of the UvrA(2)B(2) complex to a putative damaged site, the DNA wraps around one UvrB monomer. DNA wrap is dependent on ATP binding by UvrB and probably causes local melting of the DNA helix, facilitating insertion of UvrB beta-hairpin between the DNA strands. Then UvrB probes one DNA strand for the presence of a lesion. If a lesion is found the UvrA subunits dissociate and the UvrB-DNA preincision complex is formed. This complex is subsequently bound by UvrC and the second UvrB is released. If no lesion is found, the DNA wraps around the other UvrB subunit that will check the other stand for damage. The chain is UvrABC system protein B from Borreliella afzelii (strain PKo) (Borrelia afzelii).